The primary structure comprises 307 residues: Oxygen-dependent coproporphyrinogen-III oxidase (307 aa).

S99 lines the substrate pocket. A divalent metal cation contacts are provided by H103 and H113. The Proton donor role is filled by H113. 115 to 117 (NVR) lines the substrate pocket. Positions 152 and 182 each coordinate a divalent metal cation. An important for dimerization region spans residues 247–282 (YVEFNLVFDRGTLFGLQSGGRTESILLSMPPTAGWR). 265 to 267 (GGR) serves as a coordination point for substrate.

Belongs to the aerobic coproporphyrinogen-III oxidase family. In terms of assembly, homodimer. Requires a divalent metal cation as cofactor.

Its subcellular location is the cytoplasm. The catalysed reaction is coproporphyrinogen III + O2 + 2 H(+) = protoporphyrinogen IX + 2 CO2 + 2 H2O. The protein operates within porphyrin-containing compound metabolism; protoporphyrin-IX biosynthesis; protoporphyrinogen-IX from coproporphyrinogen-III (O2 route): step 1/1. In terms of biological role, involved in the heme biosynthesis. Catalyzes the aerobic oxidative decarboxylation of propionate groups of rings A and B of coproporphyrinogen-III to yield the vinyl groups in protoporphyrinogen-IX. The polypeptide is Oxygen-dependent coproporphyrinogen-III oxidase (Burkholderia pseudomallei (strain 1106a)).